Consider the following 156-residue polypeptide: Peptide deformylase 1 (156 aa).

Fe cation-binding residues include cysteine 90 and histidine 132. Glutamate 133 is an active-site residue. Histidine 136 lines the Fe cation pocket.

This sequence belongs to the polypeptide deformylase family. It depends on Fe(2+) as a cofactor.

It carries out the reaction N-terminal N-formyl-L-methionyl-[peptide] + H2O = N-terminal L-methionyl-[peptide] + formate. Removes the formyl group from the N-terminal Met of newly synthesized proteins. Requires at least a dipeptide for an efficient rate of reaction. N-terminal L-methionine is a prerequisite for activity but the enzyme has broad specificity at other positions. In Bacillus anthracis, this protein is Peptide deformylase 1.